We begin with the raw amino-acid sequence, 181 residues long: Der GTPase-activating protein YihI (181 aa).

Disordered regions lie at residues 1–75 (MSRK…KKIP) and 145–181 (EPEAEEEFEDEAPVRKSRSDDDLLADFEDFDMDDYKG). A compositionally biased stretch (basic residues) spans 32 to 43 (RLRKKDKKRKGL). Residues 146–155 (PEAEEEFEDE) show a composition bias toward acidic residues. The segment covering 156–165 (APVRKSRSDD) has biased composition (basic and acidic residues). Acidic residues predominate over residues 166 to 181 (DLLADFEDFDMDDYKG).

This sequence belongs to the YihI family. Interacts with Der.

Its function is as follows. A GTPase-activating protein (GAP) that modifies Der/EngA GTPase function. May play a role in ribosome biogenesis. The sequence is that of Der GTPase-activating protein YihI from Vibrio vulnificus (strain YJ016).